The primary structure comprises 479 residues: Sodium-coupled neutral amino acid transporter 5 (479 aa).

At 1–61 (MAISCAVGME…LDFEGKTSFG (61 aa)) the chain is on the cytoplasmic side. A helical transmembrane segment spans residues 62 to 84 (MSVFNLSNAIMGSGILGLAYAMA). The Extracellular portion of the chain corresponds to 85-97 (HTGVIFFLALLLC). The chain crosses the membrane as a helical span at residues 98–118 (IALLSSYSIHLLLTCASVVGI). Residues 119 to 135 (RAYEQLGQRAFGPAGKV) lie on the Cytoplasmic side of the membrane. A helical transmembrane segment spans residues 136–156 (VVAIIICLHNVGAMSSYLFII). The Extracellular portion of the chain corresponds to 157–176 (KSELPLVIGTFLHMDPEGDW). The chain crosses the membrane as a helical span at residues 177–197 (FLKGNLLIILVSLLIILPLAL). Residues 198–202 (MKHLG) are Cytoplasmic-facing. Residues 203–223 (YLGYTSSLSLTCMLFFLISVI) form a helical membrane-spanning segment. The Extracellular portion of the chain corresponds to 224–264 (YKKFQIGCDVSHNDTVVEAEQAPLQAFNSSCEAELFTVDSQ). Cysteine 231 and cysteine 254 are oxidised to a cystine. A glycan (N-linked (GlcNAc...) asparagine) is linked at asparagine 236. Residues 265 to 285 (MSYTVPIMAFAFVCHPEVLPI) traverse the membrane as a helical segment. The Cytoplasmic segment spans residues 286-302 (YTELCRPTQRRMQAVAN). Residues 303-323 (MSIGAMFIMYGLTATFGYLTF) traverse the membrane as a helical segment. At 324–341 (YSTVKAEMLEMYTQEDML) the chain is on the extracellular side. The helical transmembrane segment at 342 to 362 (ILCVRLAVLLAVTLTVPVVLF) threads the bilayer. Residues 363–383 (PIRRALQQLLFPSKAFSWLRH) lie on the Cytoplasmic side of the membrane. The helical transmembrane segment at 384 to 404 (VAIALILLILVNILVICVPTI) threads the bilayer. At 405–406 (RD) the chain is on the extracellular side. A helical membrane pass occupies residues 407–427 (IFGFIGSTSAPSLIFILPSVF). The Cytoplasmic segment spans residues 428–446 (YLRIVPTEVEPLFSWPKIQ). Residues 447–467 (ALCFGVLGVLFMAISLGFMFA) form a helical membrane-spanning segment. The Extracellular segment spans residues 468–479 (NWATGQSRMSGH).

It belongs to the amino acid/polyamine transporter 2 family. As to expression, expressed in the ganglion cell layer and the nerve fiber layer (at protein level). Also expreseed in the cells of the inner nuclear layer and in the inner plexiform layer (at protein level). Expressed in Mueller and ganglion retinal cell.

The protein localises to the cell membrane. The catalysed reaction is L-glutamine(out) + Na(+)(out) + H(+)(in) = L-glutamine(in) + Na(+)(in) + H(+)(out). It carries out the reaction L-serine(out) + Na(+)(out) + H(+)(in) = L-serine(in) + Na(+)(in) + H(+)(out). It catalyses the reaction L-alanine(out) + Na(+)(out) + H(+)(in) = L-alanine(in) + Na(+)(in) + H(+)(out). The enzyme catalyses glycine(out) + Na(+)(out) + H(+)(in) = glycine(in) + Na(+)(in) + H(+)(out). The catalysed reaction is L-asparagine(out) + Na(+)(out) + H(+)(in) = L-asparagine(in) + Na(+)(in) + H(+)(out). It carries out the reaction L-histidine(out) + Na(+)(out) + H(+)(in) = L-histidine(in) + Na(+)(in) + H(+)(out). It catalyses the reaction L-cysteine(out) + Na(+)(out) + H(+)(in) = L-cysteine(in) + Na(+)(in) + H(+)(out). Its activity is regulated as follows. Not inhibited by lithium. Partial allosteric regulation on ions sodium binding. Its function is as follows. Symporter that cotransports neutral amino acids and sodium ions, coupled to an H(+) antiporter activity. Releases L-glutamine and glycine from astroglial cells and may participate in the glutamate/GABA-L-glutamine cycle and the NMDA receptors activation. In addition, contributes significantly to L-glutamine uptake in retina, namely in ganglion and Mueller cells therefore, participates in the retinal glutamate-glutamine cycle. The transport activity is pH sensitive, Li(+) tolerant, bidirectional and associated with large uncoupled fluxes of protons. Moreover functions in both direction and is associated with large uncoupled fluxes of protons. The transport is electroneutral coupled to the cotransport of 1 Na(+) and the antiport of 1 H(+). May have a particular importance for modulation of net hepatic glutamine flux. The chain is Sodium-coupled neutral amino acid transporter 5 from Mus musculus (Mouse).